Reading from the N-terminus, the 201-residue chain is 3-isopropylmalate dehydratase small subunit (201 aa).

It belongs to the LeuD family. LeuD type 1 subfamily. In terms of assembly, heterodimer of LeuC and LeuD.

The catalysed reaction is (2R,3S)-3-isopropylmalate = (2S)-2-isopropylmalate. Its pathway is amino-acid biosynthesis; L-leucine biosynthesis; L-leucine from 3-methyl-2-oxobutanoate: step 2/4. Functionally, catalyzes the isomerization between 2-isopropylmalate and 3-isopropylmalate, via the formation of 2-isopropylmaleate. The sequence is that of 3-isopropylmalate dehydratase small subunit from Rhodopseudomonas palustris (strain HaA2).